We begin with the raw amino-acid sequence, 188 residues long: Elongation factor P (188 aa).

It belongs to the elongation factor P family.

It is found in the cytoplasm. The protein operates within protein biosynthesis; polypeptide chain elongation. In terms of biological role, involved in peptide bond synthesis. Stimulates efficient translation and peptide-bond synthesis on native or reconstituted 70S ribosomes in vitro. Probably functions indirectly by altering the affinity of the ribosome for aminoacyl-tRNA, thus increasing their reactivity as acceptors for peptidyl transferase. The polypeptide is Elongation factor P (Caulobacter sp. (strain K31)).